A 130-amino-acid chain; its full sequence is Large ribosomal subunit protein uL14 (130 aa).

Belongs to the universal ribosomal protein uL14 family. In terms of assembly, part of the 50S ribosomal subunit. Forms a cluster with proteins L3 and L19. In the 70S ribosome, L14 and L19 interact and together make contacts with the 16S rRNA in bridges B5 and B8.

Functionally, binds to 23S rRNA. Forms part of two intersubunit bridges in the 70S ribosome. The polypeptide is Large ribosomal subunit protein uL14 (Helicobacter pylori (strain P12)).